Reading from the N-terminus, the 415-residue chain is Putative serpin-Z6C (415 aa).

The tract at residues G357 to A381 is RCL.

It belongs to the serpin family.

Functionally, probable serine protease inhibitor. In Oryza sativa subsp. japonica (Rice), this protein is Putative serpin-Z6C.